A 646-amino-acid chain; its full sequence is FAD-binding monooxygenase prhK (646 aa).

Asn46 is a glycosylation site (N-linked (GlcNAc...) asparagine). Residues 80–97 (IIIIGAGFGGLLFAVRLI) traverse the membrane as a helical segment. FAD-binding positions include 119–122 (TWYW), 131–132 (DT), and Tyr137. 129 to 131 (MCD) contacts NADP(+). Residues 275–281 (TGATAIQ) and 298–299 (RT) contribute to the NADP(+) site. 3 N-linked (GlcNAc...) asparagine glycosylation sites follow: Asn429, Asn483, and Asn529.

The protein belongs to the FAD-binding monooxygenase family. FAD serves as cofactor.

It localises to the membrane. The catalysed reaction is preaustinoid A + AH2 + O2 = preaustinoid A1 + A + H2O. It participates in secondary metabolite biosynthesis; terpenoid biosynthesis. FAD-binding monooxygenase; part of the gene cluster that mediates the biosynthesis of paraherquonin, a meroterpenoid with a unique, highly congested hexacyclic molecular architecture. The first step of the pathway is the synthesis of 3,5-dimethylorsellinic acid (DMOA) by the polyketide synthase prhL. Synthesis of DMOA is followed by farnesylation by the prenyltransferase prhE, methylesterification by the methyl-transferase prhM, epoxidation of the prenyl chain by the flavin-dependent monooxygenase prhF, and cyclization of the farnesyl moiety by the terpene cyclase prhH, to yield the tetracyclic intermediate, protoaustinoid A. The short chain dehydrogenase prhI then oxidizes the C-3 alcohol group of the terpene cyclase product to transform protoaustinoid A into protoaustinoid B. The FAD-binding monooxygenase prhJ catalyzes the oxidation of protoaustinoid B into preaustinoid A which is further oxidized into preaustinoid A1 by FAD-binding monooxygenase phrK. Finally, prhA leads to berkeleydione via the berkeleyone B intermediate. PrhA is a multifunctional dioxygenase that first desaturates at C5-C6 to form berkeleyone B, followed by rearrangement of the A/B-ring to form the cycloheptadiene moiety in berkeleydione. Berkeleydione serves as the key intermediate for the biosynthesis of paraherquonin as well as many other meroterpenoids. The cytochrome P450 monooxygenases prhB, prhD, and prhN, as well as the isomerase prhC, are probably involved in the late stage of paraherquonin biosynthesis, after the production of berkeleydione. Especially prhC might be a multifunctional enzyme that catalyzes the D-ring expansion via intramolecular methoxy rearrangement, as well as the hydrolysis of the expanded D-ring. This Penicillium brasilianum protein is FAD-binding monooxygenase prhK.